A 293-amino-acid polypeptide reads, in one-letter code: Ribosomal protein L11 methyltransferase (293 aa).

S-adenosyl-L-methionine contacts are provided by T145, G166, D188, and N230.

This sequence belongs to the methyltransferase superfamily. PrmA family.

Its subcellular location is the cytoplasm. It carries out the reaction L-lysyl-[protein] + 3 S-adenosyl-L-methionine = N(6),N(6),N(6)-trimethyl-L-lysyl-[protein] + 3 S-adenosyl-L-homocysteine + 3 H(+). Functionally, methylates ribosomal protein L11. The protein is Ribosomal protein L11 methyltransferase of Shewanella halifaxensis (strain HAW-EB4).